A 281-amino-acid polypeptide reads, in one-letter code: 4-deoxy-L-threo-5-hexosulose-uronate ketol-isomerase (281 aa).

Positions 198, 200, 205, and 248 each coordinate Zn(2+).

Belongs to the KduI family. Zn(2+) is required as a cofactor.

The catalysed reaction is 5-dehydro-4-deoxy-D-glucuronate = 3-deoxy-D-glycero-2,5-hexodiulosonate. It participates in glycan metabolism; pectin degradation; 2-dehydro-3-deoxy-D-gluconate from pectin: step 4/5. Its function is as follows. Catalyzes the isomerization of 5-dehydro-4-deoxy-D-glucuronate to 3-deoxy-D-glycero-2,5-hexodiulosonate. The polypeptide is 4-deoxy-L-threo-5-hexosulose-uronate ketol-isomerase (Lacticaseibacillus paracasei (strain ATCC 334 / BCRC 17002 / CCUG 31169 / CIP 107868 / KCTC 3260 / NRRL B-441) (Lactobacillus paracasei)).